A 431-amino-acid chain; its full sequence is Aspartokinase (431 aa).

It belongs to the aspartokinase family.

The catalysed reaction is L-aspartate + ATP = 4-phospho-L-aspartate + ADP. The protein operates within amino-acid biosynthesis; L-lysine biosynthesis via DAP pathway; (S)-tetrahydrodipicolinate from L-aspartate: step 1/4. It participates in amino-acid biosynthesis; L-methionine biosynthesis via de novo pathway; L-homoserine from L-aspartate: step 1/3. Its pathway is amino-acid biosynthesis; L-threonine biosynthesis; L-threonine from L-aspartate: step 1/5. The polypeptide is Aspartokinase (lysC) (Chlamydia trachomatis serovar D (strain ATCC VR-885 / DSM 19411 / UW-3/Cx)).